Reading from the N-terminus, the 194-residue chain is Ras-related protein Rab-22A (194 aa).

12 to 20 contacts GTP; that stretch reads GDTGVGKSS. The short motif at 34 to 42 is the Effector region element; it reads INPTIGASF. Residues 60 to 64, 118 to 121, and 148 to 150 contribute to the GTP site; these read DTAGQ, NKCD, and SAK. The interval 170-194 is disordered; that stretch reads DANPPSGGKGFKLRRQPSEPQRSCC. Residues Cys193 and Cys194 are each lipidated (S-geranylgeranyl cysteine).

It belongs to the small GTPase superfamily. Rab family. In terms of assembly, interacts directly with ZFYVE20. Interacts (in its GTP-bound form) with RINL and RABGEF1. Binds EEA1.

Its subcellular location is the endosome membrane. The protein localises to the cell membrane. It is found in the early endosome. The protein resides in the late endosome. It localises to the cell projection. Its subcellular location is the ruffle. The protein localises to the cytoplasmic vesicle. It is found in the phagosome. The protein resides in the phagosome membrane. Functionally, plays a role in endocytosis and intracellular protein transport. Mediates trafficking of TF from early endosomes to recycling endosomes. Required for NGF-mediated endocytosis of NTRK1, and subsequent neurite outgrowth. Binds GTP and GDP and has low GTPase activity. Alternates between a GTP-bound active form and a GDP-bound inactive form. This Canis lupus familiaris (Dog) protein is Ras-related protein Rab-22A (RAB22A).